The primary structure comprises 491 residues: Sodium-dependent glucose transporter 1 (491 aa).

11 consecutive transmembrane segments (helical) span residues 26–46, 52–72, 81–101, 119–139, 165–185, 210–230, 255–275, 277–297, 303–323, 338–358, and 365–385; these read FIFVGRSMGYLGGSVLGGILF, HLLLGISMLATAAGLFVVPWC, VMSVVGMSMGFLDTGGNIIIL, FALGAFVAPILAKLALEFLPL, LSYIVIGTYILLVSLFLFILF, AVIFLLFLFFFCYVGAEVAYG, LFWGVFAAVRGLAICFATCLY, GTMLLLSVIGCTLSSLILVLF, LLWVGTAVYGASMATTFPSGF, SLFVVGAALGEMAIPASVGYL, and FPVLMYTALASSTMTAILFPV. Disordered stretches follow at residues 397 to 425 and 438 to 491; these read AQYNRVESDDRRALLSSSGMEEEDEDEAQ and NDQM…EKND. The segment covering 416–425 has biased composition (acidic residues); that stretch reads MEEEDEDEAQ. Residues 440 to 458 are compositionally biased toward polar residues; that stretch reads QMKNSVTVISEDTPGNSAP.

It belongs to the major facilitator superfamily.

Its subcellular location is the apical cell membrane. Functionally, may function as a sodium-dependent glucose transporter. Potential channels for urea in the inner medulla of kidney. The protein is Sodium-dependent glucose transporter 1 (mfsd4b) of Xenopus laevis (African clawed frog).